The primary structure comprises 330 residues: Urokinase plasminogen activator surface receptor (330 aa).

A signal peptide spans 1 to 20 (MGQPLLLLLLVYTYIPGSWG). UPAR/Ly6 domains follow at residues 21 to 112 (LRCL…RNRY), 113 to 208 (LECA…PPNG), and 209 to 300 (LQCY…PGKG). 3 disulfides stabilise this stretch: Cys-23–Cys-44, Cys-26–Cys-32, and Cys-37–Cys-65. N-linked (GlcNAc...) asparagine glycosylation is present at Asn-28. Asn-72 carries an N-linked (GlcNAc...) asparagine glycan. Intrachain disulfides connect Cys-91-Cys-96, Cys-115-Cys-142, Cys-118-Cys-125, Cys-135-Cys-164, Cys-170-Cys-187, Cys-188-Cys-193, Cys-211-Cys-239, Cys-214-Cys-222, Cys-232-Cys-258, Cys-264-Cys-282, and Cys-283-Cys-288. Asn-179 and Asn-189 each carry an N-linked (GlcNAc...) asparagine glycan. An N-linked (GlcNAc...) asparagine glycan is attached at Asn-279. The GPI-anchor amidated glycine moiety is linked to residue Gly-300. Positions 301–330 (GAPKTSPAHLSFFVSLLLTARLWGATLLCT) are cleaved as a propeptide — removed in mature form.

Monomer. Interacts (via the UPAR/Ly6 domains) with SRPX2. Interacts with MRC2. Interacts with SORL1 (via N-terminal ectodomain); this interaction decreases PLAUR internalization. The ternary complex composed of PLAUR-PLAU-SERPINE1 also interacts with SORL1. Interacts with CD82; this interaction prevents PLAUR from binding to its high affinity ligand PLAU.

The protein resides in the cell membrane. Acts as a receptor for urokinase plasminogen activator. Plays a role in localizing and promoting plasmin formation. Mediates the proteolysis-independent signal transduction activation effects of U-PA. The protein is Urokinase plasminogen activator surface receptor (PLAUR) of Bos taurus (Bovine).